The chain runs to 376 residues: 3-dehydroquinate synthase (376 aa).

Residues 115–119 (GVIGD), 139–140 (TS), Lys-152, and Lys-161 each bind NAD(+). Zn(2+) is bound by residues Glu-194, His-256, and His-275.

It belongs to the sugar phosphate cyclases superfamily. Dehydroquinate synthase family. It depends on Co(2+) as a cofactor. Requires Zn(2+) as cofactor. NAD(+) serves as cofactor.

It is found in the cytoplasm. The enzyme catalyses 7-phospho-2-dehydro-3-deoxy-D-arabino-heptonate = 3-dehydroquinate + phosphate. The protein operates within metabolic intermediate biosynthesis; chorismate biosynthesis; chorismate from D-erythrose 4-phosphate and phosphoenolpyruvate: step 2/7. Catalyzes the conversion of 3-deoxy-D-arabino-heptulosonate 7-phosphate (DAHP) to dehydroquinate (DHQ). The sequence is that of 3-dehydroquinate synthase from Rhizobium leguminosarum bv. trifolii (strain WSM2304).